A 312-amino-acid chain; its full sequence is Src-like-adapter (312 aa).

The interval 1–33 (MLCRLPGPSTSRGEKEMGNSMKSTPAPLERPLS) is disordered. One can recognise an SH3 domain in the interval 38-98 (LESDFLAVLN…PGICVARVYH (61 aa)). An SH2 domain is found at 100 to 191 (WLFEGLGRDK…GLCCVLTTPC (92 aa)). The tract at residues 206 to 312 (CTSPGSPVTL…TQKTKALTAT (107 aa)) is SLA C-terminal. At S274 the chain carries Phosphoserine.

Homodimer. Interacts with phosphorylated CBL, SYK and LAT. Homodimerization and interaction with phosphorylated CBL occurs via its C-terminal domain. Interacts with PDGFRB and EPHA2. Interacts with phosphorylated proteins ZAP70; CD3Z; VAV1 and LCP2 via its SH2 domain. Phosphorylated.

Its subcellular location is the cytoplasm. The protein resides in the endosome. In terms of biological role, adapter protein, which negatively regulates T-cell receptor (TCR) signaling. Inhibits T-cell antigen-receptor induced activation of nuclear factor of activated T-cells. Involved in the negative regulation of positive selection and mitosis of T-cells. May act by linking signaling proteins such as ZAP70 with CBL, leading to a CBL dependent degradation of signaling proteins. The chain is Src-like-adapter (Sla) from Rattus norvegicus (Rat).